A 293-amino-acid chain; its full sequence is Hydroxyquinol 1,2-dioxygenase (293 aa).

Fe cation-binding residues include Tyr164, Tyr197, His221, and His223.

The protein belongs to the intradiol ring-cleavage dioxygenase family. Homodimer. Fe(3+) is required as a cofactor.

It catalyses the reaction benzene-1,2,4-triol + O2 = maleylacetate + 2 H(+). It functions in the pathway aromatic compound metabolism; beta-ketoadipate pathway; 3-oxoadipate from 3,4-dihydroxybenzoate: step 2/4. Inhibited by 3,5-dichlorocatechol, chlorohydroquinone and 4,5-dibromocatechol. In terms of biological role, catalyzes the ortho-cleavage of the aromatic ring of hydroxyquinol. This is Hydroxyquinol 1,2-dioxygenase (chqB) from Nocardioides simplex (Arthrobacter simplex).